Consider the following 231-residue polypeptide: Large ribosomal subunit protein uL3 (231 aa).

N5-methylglutamine is present on Gln-151.

It belongs to the universal ribosomal protein uL3 family. As to quaternary structure, part of the 50S ribosomal subunit. Forms a cluster with proteins L14 and L19. Post-translationally, methylated by PrmB.

Functionally, one of the primary rRNA binding proteins, it binds directly near the 3'-end of the 23S rRNA, where it nucleates assembly of the 50S subunit. This chain is Large ribosomal subunit protein uL3, found in Granulibacter bethesdensis (strain ATCC BAA-1260 / CGDNIH1).